A 671-amino-acid polypeptide reads, in one-letter code: DNA ligase (671 aa).

NAD(+) contacts are provided by residues 32–36 (DAEYD), 81–82 (SL), and glutamate 113. Lysine 115 functions as the N6-AMP-lysine intermediate in the catalytic mechanism. Arginine 136, glutamate 173, lysine 290, and lysine 314 together coordinate NAD(+). Zn(2+) contacts are provided by cysteine 408, cysteine 411, cysteine 426, and cysteine 432. The BRCT domain maps to 593–671 (EIDSPFAGKT…EAEMLRLLGS (79 aa)).

It belongs to the NAD-dependent DNA ligase family. LigA subfamily. Mg(2+) is required as a cofactor. Requires Mn(2+) as cofactor.

It carries out the reaction NAD(+) + (deoxyribonucleotide)n-3'-hydroxyl + 5'-phospho-(deoxyribonucleotide)m = (deoxyribonucleotide)n+m + AMP + beta-nicotinamide D-nucleotide.. In terms of biological role, DNA ligase that catalyzes the formation of phosphodiester linkages between 5'-phosphoryl and 3'-hydroxyl groups in double-stranded DNA using NAD as a coenzyme and as the energy source for the reaction. It is essential for DNA replication and repair of damaged DNA. This is DNA ligase from Escherichia coli O9:H4 (strain HS).